Here is a 217-residue protein sequence, read N- to C-terminus: Probable transaldolase (217 aa).

Lysine 83 serves as the catalytic Schiff-base intermediate with substrate.

It belongs to the transaldolase family. Type 3B subfamily.

The protein localises to the cytoplasm. The enzyme catalyses D-sedoheptulose 7-phosphate + D-glyceraldehyde 3-phosphate = D-erythrose 4-phosphate + beta-D-fructose 6-phosphate. It functions in the pathway carbohydrate degradation; pentose phosphate pathway; D-glyceraldehyde 3-phosphate and beta-D-fructose 6-phosphate from D-ribose 5-phosphate and D-xylulose 5-phosphate (non-oxidative stage): step 2/3. Its function is as follows. Transaldolase is important for the balance of metabolites in the pentose-phosphate pathway. The protein is Probable transaldolase of Dinoroseobacter shibae (strain DSM 16493 / NCIMB 14021 / DFL 12).